A 254-amino-acid polypeptide reads, in one-letter code: tRNA (guanine-N(1)-)-methyltransferase (254 aa).

Residues glycine 115 and 135-140 (VGDFVL) contribute to the S-adenosyl-L-methionine site.

Belongs to the RNA methyltransferase TrmD family. In terms of assembly, homodimer.

The protein localises to the cytoplasm. The catalysed reaction is guanosine(37) in tRNA + S-adenosyl-L-methionine = N(1)-methylguanosine(37) in tRNA + S-adenosyl-L-homocysteine + H(+). Functionally, specifically methylates guanosine-37 in various tRNAs. This is tRNA (guanine-N(1)-)-methyltransferase from Francisella tularensis subsp. tularensis (strain FSC 198).